The following is a 275-amino-acid chain: NAD kinase (275 aa).

Residue Asp-66 is the Proton acceptor of the active site. Residues Asp-66–Gly-67, His-71, Asn-135–Glu-136, Lys-146, Arg-163, Asp-165, and Thr-176–Ser-181 each bind NAD(+).

The protein belongs to the NAD kinase family. A divalent metal cation is required as a cofactor.

It is found in the cytoplasm. It carries out the reaction NAD(+) + ATP = ADP + NADP(+) + H(+). Its function is as follows. Involved in the regulation of the intracellular balance of NAD and NADP, and is a key enzyme in the biosynthesis of NADP. Catalyzes specifically the phosphorylation on 2'-hydroxyl of the adenosine moiety of NAD to yield NADP. This Methanosphaera stadtmanae (strain ATCC 43021 / DSM 3091 / JCM 11832 / MCB-3) protein is NAD kinase.